The following is a 443-amino-acid chain: uncharacterized protein (443 aa).

This is an uncharacterized protein from Saccharomyces cerevisiae (strain ATCC 204508 / S288c) (Baker's yeast).